A 374-amino-acid chain; its full sequence is UDP-N-acetylglucosamine--N-acetylmuramyl-(pentapeptide) pyrophosphoryl-undecaprenol N-acetylglucosamine transferase (374 aa).

UDP-N-acetyl-alpha-D-glucosamine is bound by residues 14–16, N125, R168, S196, and Q297; that span reads TGG.

This sequence belongs to the glycosyltransferase 28 family. MurG subfamily.

Its subcellular location is the cell inner membrane. It carries out the reaction di-trans,octa-cis-undecaprenyl diphospho-N-acetyl-alpha-D-muramoyl-L-alanyl-D-glutamyl-meso-2,6-diaminopimeloyl-D-alanyl-D-alanine + UDP-N-acetyl-alpha-D-glucosamine = di-trans,octa-cis-undecaprenyl diphospho-[N-acetyl-alpha-D-glucosaminyl-(1-&gt;4)]-N-acetyl-alpha-D-muramoyl-L-alanyl-D-glutamyl-meso-2,6-diaminopimeloyl-D-alanyl-D-alanine + UDP + H(+). It participates in cell wall biogenesis; peptidoglycan biosynthesis. Functionally, cell wall formation. Catalyzes the transfer of a GlcNAc subunit on undecaprenyl-pyrophosphoryl-MurNAc-pentapeptide (lipid intermediate I) to form undecaprenyl-pyrophosphoryl-MurNAc-(pentapeptide)GlcNAc (lipid intermediate II). The protein is UDP-N-acetylglucosamine--N-acetylmuramyl-(pentapeptide) pyrophosphoryl-undecaprenol N-acetylglucosamine transferase of Rhodopseudomonas palustris (strain BisA53).